The sequence spans 138 residues: Basic phospholipase A2 Sct-N6 (138 aa).

Positions 1–16 are cleaved as a signal peptide; it reads MRTFWIVAVLLVGVEG. 7 disulfides stabilise this stretch: Cys42-Cys131, Cys44-Cys60, Cys59-Cys111, Cys65-Cys138, Cys66-Cys104, Cys73-Cys97, and Cys91-Cys102. Positions 43, 45, and 47 each coordinate Ca(2+). The active site involves His63. Residue Asp64 coordinates Ca(2+). Asp105 is a catalytic residue.

The protein belongs to the phospholipase A2 family. Group II subfamily. D49 sub-subfamily. Ca(2+) serves as cofactor. In terms of tissue distribution, expressed by the venom gland.

It localises to the secreted. It catalyses the reaction a 1,2-diacyl-sn-glycero-3-phosphocholine + H2O = a 1-acyl-sn-glycero-3-phosphocholine + a fatty acid + H(+). Snake venom phospholipase A2 (PLA2) that displays edema-inducing activities, as well as presynaptic neurotoxicity and low myotoxicity. PLA2 catalyzes the calcium-dependent hydrolysis of the 2-acyl groups in 3-sn-phosphoglycerides. This Sistrurus tergeminus (Western massasauga) protein is Basic phospholipase A2 Sct-N6.